A 427-amino-acid polypeptide reads, in one-letter code: Enolase (427 aa).

Q163 provides a ligand contact to (2R)-2-phosphoglycerate. Residue E205 is the Proton donor of the active site. Mg(2+) contacts are provided by D242, E285, and D312. (2R)-2-phosphoglycerate-binding residues include K337, R366, S367, and K388. K337 functions as the Proton acceptor in the catalytic mechanism.

The protein belongs to the enolase family. It depends on Mg(2+) as a cofactor.

The protein resides in the cytoplasm. It is found in the secreted. The protein localises to the cell surface. It catalyses the reaction (2R)-2-phosphoglycerate = phosphoenolpyruvate + H2O. Its pathway is carbohydrate degradation; glycolysis; pyruvate from D-glyceraldehyde 3-phosphate: step 4/5. In terms of biological role, catalyzes the reversible conversion of 2-phosphoglycerate (2-PG) into phosphoenolpyruvate (PEP). It is essential for the degradation of carbohydrates via glycolysis. In Beijerinckia indica subsp. indica (strain ATCC 9039 / DSM 1715 / NCIMB 8712), this protein is Enolase.